Reading from the N-terminus, the 273-residue chain is MEFGLREWLIVIGIIVIAGILFDGWRRMRGGKGRLKFKLDRSFANMPDDDSDPDLLSPPRVVKREMEPQLDEDDLPSMSAKELPRRSRNEPQQGDLNLAVDEPVPTLLNPVDDKPQEPKKSAKLSAEAAPVEEVLVINVVARDDLGFKGPALLQNILESGLRFGEMDIFHRHESMAGNGEVLFSMANALKPGTFDLDDIEGFSTRAVSFFLSLPGPRHPKQAFDVMVAAARKLAHELGGELKDDQRSVMTAQTIEHYRQRIVEFERRQLTQKR.

A topological domain (periplasmic) is located at residue M1. The chain crosses the membrane as a helical span at residues 2–22 (EFGLREWLIVIGIIVIAGILF). The Cytoplasmic segment spans residues 23 to 273 (DGWRRMRGGK…FERRQLTQKR (251 aa)). A disordered region spans residues 65–125 (EMEPQLDEDD…QEPKKSAKLS (61 aa)). The span at 111-120 (VDDKPQEPKK) shows a compositional bias: basic and acidic residues.

It belongs to the ZipA family. Interacts with FtsZ via their C-terminal domains.

It localises to the cell inner membrane. Its function is as follows. Essential cell division protein that stabilizes the FtsZ protofilaments by cross-linking them and that serves as a cytoplasmic membrane anchor for the Z ring. Also required for the recruitment to the septal ring of downstream cell division proteins. The sequence is that of Cell division protein ZipA from Ectopseudomonas mendocina (strain ymp) (Pseudomonas mendocina).